A 453-amino-acid polypeptide reads, in one-letter code: Trigger factor (453 aa).

A PPIase FKBP-type domain is found at 171-256 (GDRVTVSFKG…ATKVEAPQDV (86 aa)).

It belongs to the FKBP-type PPIase family. Tig subfamily.

It is found in the cytoplasm. The catalysed reaction is [protein]-peptidylproline (omega=180) = [protein]-peptidylproline (omega=0). In terms of biological role, involved in protein export. Acts as a chaperone by maintaining the newly synthesized protein in an open conformation. Functions as a peptidyl-prolyl cis-trans isomerase. The protein is Trigger factor of Rhodopseudomonas palustris (strain BisB5).